The following is a 38-amino-acid chain: MLSIFETVAAAAPVTVAETQQASNNENRGQPGYYCLIA.

Residue Cys-35 is modified to Cysteine methyl ester. Residue Cys-35 is the site of S-farnesyl cysteine attachment. The propeptide at Leu-36–Ala-38 is removed in mature form.

The protein resides in the cell membrane. Functionally, mating pheromone for A2 allele. This chain is A2-specific pheromone (MFA2), found in Mycosarcoma maydis (Corn smut fungus).